Here is a 368-residue protein sequence, read N- to C-terminus: Isopentenyl-diphosphate delta-isomerase (368 aa).

Substrate is bound at residue 7–8; the sequence is RK. FMN is bound by residues Thr65, 66–68, Ser96, and Asn125; that span reads GMT. Residue 96 to 98 coordinates substrate; that stretch reads SQR. Gln160 provides a ligand contact to substrate. Glu161 contacts Mg(2+). Residues Lys193, Ser218, Thr223, 275-277, and 296-297 contribute to the FMN site; these read GIR and AL.

Belongs to the IPP isomerase type 2 family. In terms of assembly, homooctamer. Dimer of tetramers. Requires FMN as cofactor. The cofactor is NADPH. Mg(2+) is required as a cofactor.

Its subcellular location is the cytoplasm. The catalysed reaction is isopentenyl diphosphate = dimethylallyl diphosphate. Involved in the biosynthesis of isoprenoids. Catalyzes the 1,3-allylic rearrangement of the homoallylic substrate isopentenyl (IPP) to its allylic isomer, dimethylallyl diphosphate (DMAPP). The protein is Isopentenyl-diphosphate delta-isomerase of Saccharolobus islandicus (strain L.S.2.15 / Lassen #1) (Sulfolobus islandicus).